Consider the following 179-residue polypeptide: Peroxiredoxin (179 aa).

Residues 2–152 (TMEKQVPIVT…VEGWFEEEGF (151 aa)) form the Thioredoxin domain. The active-site Cysteine sulfenic acid (-SOH) intermediate (for peroxiredoxin activity) is Cys-56.

Belongs to the peroxiredoxin family. Prx5 subfamily. Monomer.

The catalysed reaction is a hydroperoxide + 2 glutathione = an alcohol + glutathione disulfide + H2O. Thiol-specific peroxidase that catalyzes the reduction of hydrogen peroxide and organic hydroperoxides to water and alcohols, respectively. Plays a role in cell protection against oxidative stress by detoxifying peroxides. The chain is Peroxiredoxin from Rhizobium etli.